The primary structure comprises 61 residues: Metallothionein-2B (61 aa).

Met1 bears the N-acetylmethionine mark. The beta stretch occupies residues 1-29 (MDPNCSCATGDSCTCASSCKCKECKCTSC). 20 residues coordinate a divalent metal cation: Cys5, Cys7, Cys13, Cys15, Cys19, Cys21, Cys24, Cys26, Cys29, Cys33, Cys34, Cys36, Cys37, Cys41, Cys44, Cys48, Cys50, Cys57, Cys59, and Cys60. The tract at residues 30–61 (KKSCCSCCPAGCTKCAQGCICKGASDKCSCCA) is alpha.

Belongs to the metallothionein superfamily. Type 1 family. In terms of assembly, monomer.

Metallothioneins have a high content of cysteine residues that bind various heavy metals; these proteins are transcriptionally regulated by both heavy metals and glucocorticoids. In Oryctolagus cuniculus (Rabbit), this protein is Metallothionein-2B.